The sequence spans 418 residues: Beta-arrestin-1 (418 aa).

An interaction with SRC region spans residues Met1 to Ser163. Residues Pro45–Ser86 form an interaction with CHRM2 region. Tyr47 is modified (phosphotyrosine). Residues Lys250, Met255, Lys324, and Lys326 each coordinate 1D-myo-inositol hexakisphosphate. The segment at Ile318–Arg418 is interaction with TRAF6. Positions His353–Asn375 are disordered. Residues Lys355–Pro366 are compositionally biased toward basic and acidic residues. Residues Asp385–Arg395 carry the [DE]-X(1,2)-F-X-X-[FL]-X-X-X-R motif motif. Residues Lys397–Arg418 are disordered. Ser412 carries the phosphoserine; by GRK5 modification.

This sequence belongs to the arrestin family. As to quaternary structure, monomer. Homodimer. Homooligomer; the self-association is mediated by InsP6-binding. Heterooligomer with ARRB2; the association is mediated by InsP6-binding. Interacts with GPR143. Interacts with ADRB2 (phosphorylated). Interacts with CHRM2 (phosphorylated). Interacts with LHCGR. Interacts with CYTH2 and CASR. Interacts with AP2B1 (dephosphorylated at 'Tyr-737'); phosphorylation of AP2B1 at 'Tyr-737' disrupts the interaction. Interacts (dephosphorylated at Ser-412) with CLTC. Interacts with CCR2 and GRK2. Interacts with CRR5. Interacts with PTAFR (phosphorylated on serine residues). Interacts with CLTC and MAP2K3. Interacts with CREB1. Interacts with TRAF6. Interacts with IGF1R and MDM2. Interacts with C5AR1. Interacts with PDE4D. Interacts with SRC (via the SH3 domain and the protein kinase domain); the interaction is independent of the phosphorylation state of SRC C-terminus. Interacts with TACR1. Interacts with RAF1. Interacts with CHUK, IKBKB and MAP3K14. Interacts with DVL1; the interaction is enhanced by phosphorylation of DVL1. Interacts with DVL2; the interaction is enhanced by phosphorylation of DVL2. Interacts with IGF1R. Associates with MAP kinase p38. Part of a MAPK signaling complex consisting of TACR1, ARRB1, SRC, MAPK1 (activated) and MAPK3 (activated). Part of a MAPK signaling complex consisting of F2RL1, ARRB1, RAF1, MAPK1 (activated) and MAPK3 (activated). Interacts with MAP2K4/MKK4. Interacts with HCK and CXCR1 (phosphorylated). Interacts with ACKR3 and ACKR4. Interacts with ARRDC1; the interaction is direct. Interacts with GPR61, GPR62 and GPR135. Constitutively phosphorylated at Ser-412 in the cytoplasm. At the plasma membrane, is rapidly dephosphorylated, a process that is required for clathrin binding and ADRB2 endocytosis but not for ADRB2 binding and desensitization. Once internalized, is rephosphorylated. Post-translationally, the ubiquitination status appears to regulate the formation and trafficking of beta-arrestin-GPCR complexes and signaling. Ubiquitination appears to occur GPCR-specific. Ubiquitinated by MDM2; the ubiquitination is required for rapid internalization of ADRB2. Deubiquitinated by USP33; the deubiquitination leads to a dissociation of the beta-arrestin-GPCR complex. Stimulation of a class A GPCR, such as ADRB2, induces transient ubiquitination and subsequently promotes association with USP33.

It is found in the cytoplasm. The protein localises to the nucleus. The protein resides in the cell membrane. Its subcellular location is the membrane. It localises to the clathrin-coated pit. It is found in the cell projection. The protein localises to the pseudopodium. The protein resides in the cytoplasmic vesicle. Functions in regulating agonist-mediated G-protein coupled receptor (GPCR) signaling by mediating both receptor desensitization and resensitization processes. During homologous desensitization, beta-arrestins bind to the GPRK-phosphorylated receptor and sterically preclude its coupling to the cognate G-protein; the binding appears to require additional receptor determinants exposed only in the active receptor conformation. The beta-arrestins target many receptors for internalization by acting as endocytic adapters (CLASPs, clathrin-associated sorting proteins) and recruiting the GPRCs to the adapter protein 2 complex 2 (AP-2) in clathrin-coated pits (CCPs). However, the extent of beta-arrestin involvement appears to vary significantly depending on the receptor, agonist and cell type. Internalized arrestin-receptor complexes traffic to intracellular endosomes, where they remain uncoupled from G-proteins. Two different modes of arrestin-mediated internalization occur. Class A receptors, like ADRB2, OPRM1, ENDRA, D1AR and ADRA1B dissociate from beta-arrestin at or near the plasma membrane and undergo rapid recycling. Class B receptors, like AVPR2, AGTR1, NTSR1, TRHR and TACR1 internalize as a complex with arrestin and traffic with it to endosomal vesicles, presumably as desensitized receptors, for extended periods of time. Receptor resensitization then requires that receptor-bound arrestin is removed so that the receptor can be dephosphorylated and returned to the plasma membrane. Involved in internalization of P2RY4 and UTP-stimulated internalization of P2RY2. Involved in phosphorylation-dependent internalization of OPRD1 ands subsequent recycling. Involved in the degradation of cAMP by recruiting cAMP phosphodiesterases to ligand-activated receptors. Beta-arrestins function as multivalent adapter proteins that can switch the GPCR from a G-protein signaling mode that transmits short-lived signals from the plasma membrane via small molecule second messengers and ion channels to a beta-arrestin signaling mode that transmits a distinct set of signals that are initiated as the receptor internalizes and transits the intracellular compartment. Acts as a signaling scaffold for MAPK pathways such as MAPK1/3 (ERK1/2). ERK1/2 activated by the beta-arrestin scaffold is largely excluded from the nucleus and confined to cytoplasmic locations such as endocytic vesicles, also called beta-arrestin signalosomes. Recruits c-Src/SRC to ADRB2 resulting in ERK activation. GPCRs for which the beta-arrestin-mediated signaling relies on both ARRB1 and ARRB2 (codependent regulation) include ADRB2, F2RL1 and PTH1R. For some GPCRs the beta-arrestin-mediated signaling relies on either ARRB1 or ARRB2 and is inhibited by the other respective beta-arrestin form (reciprocal regulation). Inhibits ERK1/2 signaling in AGTR1- and AVPR2-mediated activation (reciprocal regulation). Is required for SP-stimulated endocytosis of NK1R and recruits c-Src/SRC to internalized NK1R resulting in ERK1/2 activation, which is required for the antiapoptotic effects of SP. Is involved in proteinase-activated F2RL1-mediated ERK activity. Acts as a signaling scaffold for the AKT1 pathway. Is involved in alpha-thrombin-stimulated AKT1 signaling. Is involved in IGF1-stimulated AKT1 signaling leading to increased protection from apoptosis. Involved in activation of the p38 MAPK signaling pathway and in actin bundle formation. Involved in F2RL1-mediated cytoskeletal rearrangement and chemotaxis. Involved in AGTR1-mediated stress fiber formation by acting together with GNAQ to activate RHOA. Appears to function as signaling scaffold involved in regulation of MIP-1-beta-stimulated CCR5-dependent chemotaxis. Involved in attenuation of NF-kappa-B-dependent transcription in response to GPCR or cytokine stimulation by interacting with and stabilizing CHUK. May serve as nuclear messenger for GPCRs. Involved in OPRD1-stimulated transcriptional regulation by translocating to CDKN1B and FOS promoter regions and recruiting EP300 resulting in acetylation of histone H4. Involved in regulation of LEF1 transcriptional activity via interaction with DVL1 and/or DVL2 Also involved in regulation of receptors other than GPCRs. Involved in Toll-like receptor and IL-1 receptor signaling through the interaction with TRAF6 which prevents TRAF6 autoubiquitination and oligomerization required for activation of NF-kappa-B and JUN. Binds phosphoinositides. Binds inositolhexakisphosphate (InsP6). Involved in IL8-mediated granule release in neutrophils. Required for atypical chemokine receptor ACKR2-induced RAC1-LIMK1-PAK1-dependent phosphorylation of cofilin (CFL1) and for the up-regulation of ACKR2 from endosomal compartment to cell membrane, increasing its efficiency in chemokine uptake and degradation. Involved in the internalization of the atypical chemokine receptor ACKR3. Negatively regulates the NOTCH signaling pathway by mediating the ubiquitination and degradation of NOTCH1 by ITCH. Participates in the recruitment of the ubiquitin-protein ligase to the receptor. This is Beta-arrestin-1 (ARRB1) from Homo sapiens (Human).